A 434-amino-acid polypeptide reads, in one-letter code: D-amino acid dehydrogenase (434 aa).

3 to 17 (VIILGGGVIGVTSAW) is an FAD binding site.

Belongs to the DadA oxidoreductase family. Requires FAD as cofactor.

It carries out the reaction a D-alpha-amino acid + A + H2O = a 2-oxocarboxylate + AH2 + NH4(+). It functions in the pathway amino-acid degradation; D-alanine degradation; NH(3) and pyruvate from D-alanine: step 1/1. In terms of biological role, oxidative deamination of D-amino acids. In Proteus mirabilis (strain HI4320), this protein is D-amino acid dehydrogenase.